We begin with the raw amino-acid sequence, 105 residues long: Large ribosomal subunit protein uL24 (105 aa).

The tract at residues 1 to 25 (MHIKKGDNVKVIAGKDKGKEGKVVS) is disordered.

This sequence belongs to the universal ribosomal protein uL24 family. In terms of assembly, part of the 50S ribosomal subunit.

Functionally, one of two assembly initiator proteins, it binds directly to the 5'-end of the 23S rRNA, where it nucleates assembly of the 50S subunit. In terms of biological role, one of the proteins that surrounds the polypeptide exit tunnel on the outside of the subunit. The sequence is that of Large ribosomal subunit protein uL24 from Staphylococcus saprophyticus subsp. saprophyticus (strain ATCC 15305 / DSM 20229 / NCIMB 8711 / NCTC 7292 / S-41).